The primary structure comprises 99 residues: Large ribosomal subunit protein uL23 (99 aa).

Belongs to the universal ribosomal protein uL23 family. In terms of assembly, part of the 50S ribosomal subunit. Contacts protein L29, and trigger factor when it is bound to the ribosome.

One of the early assembly proteins it binds 23S rRNA. One of the proteins that surrounds the polypeptide exit tunnel on the outside of the ribosome. Forms the main docking site for trigger factor binding to the ribosome. This is Large ribosomal subunit protein uL23 from Haemophilus influenzae (strain 86-028NP).